The primary structure comprises 80 residues: Teretoxin Tsu6.5 (80 aa).

Residues 1–21 (MAINGRLLCLCLVLGLVFESL) form the signal peptide. Residues 22–42 (GHPSVQEKRAAEDSKPSGERR) constitute a propeptide that is removed on maturation.

It belongs to the teretoxin M (TM) superfamily. Post-translationally, contains 3 disulfide bonds. Expressed by the venom duct.

It is found in the secreted. This is Teretoxin Tsu6.5 from Terebra subulata (Chocolate spotted auger).